A 211-amino-acid polypeptide reads, in one-letter code: Proteasome subunit beta 1 (211 aa).

Residues 1–17 (MVIMGNELQLENKILKG) constitute a propeptide, removed in mature form; by autocatalysis. Thr-18 acts as the Nucleophile in catalysis.

The protein belongs to the peptidase T1B family. The 20S proteasome core is composed of 14 alpha and 14 beta subunits that assemble into four stacked heptameric rings, resulting in a barrel-shaped structure. The two inner rings, each composed of seven catalytic beta subunits, are sandwiched by two outer rings, each composed of seven alpha subunits. The catalytic chamber with the active sites is on the inside of the barrel. Has a gated structure, the ends of the cylinder being occluded by the N-termini of the alpha-subunits. Is capped at one or both ends by the proteasome regulatory ATPase, PAN.

It is found in the cytoplasm. The catalysed reaction is Cleavage of peptide bonds with very broad specificity.. With respect to regulation, the formation of the proteasomal ATPase PAN-20S proteasome complex, via the docking of the C-termini of PAN into the intersubunit pockets in the alpha-rings, triggers opening of the gate for substrate entry. Interconversion between the open-gate and close-gate conformations leads to a dynamic regulation of the 20S proteasome proteolysis activity. Component of the proteasome core, a large protease complex with broad specificity involved in protein degradation. The chain is Proteasome subunit beta 1 from Saccharolobus islandicus (strain M.16.27) (Sulfolobus islandicus).